The following is a 146-amino-acid chain: Large ribosomal subunit protein uL15y (146 aa).

2 stretches are compositionally biased toward basic residues: residues 1–14 (MATALKKNRKKRGH) and 21–30 (RIGKHRKHPG). Positions 1-38 (MATALKKNRKKRGHVSAGHGRIGKHRKHPGGRGNAGGM) are disordered.

This sequence belongs to the universal ribosomal protein uL15 family.

The polypeptide is Large ribosomal subunit protein uL15y (RPL27AB) (Arabidopsis thaliana (Mouse-ear cress)).